Consider the following 169-residue polypeptide: ATP synthase subunit b (169 aa).

A helical transmembrane segment spans residues 3–23; that stretch reads IKILLLVLPFFAFASEHGGVN.

Belongs to the ATPase B chain family. In terms of assembly, F-type ATPases have 2 components, F(1) - the catalytic core - and F(0) - the membrane proton channel. F(1) has five subunits: alpha(3), beta(3), gamma(1), delta(1), epsilon(1). F(0) has three main subunits: a(1), b(2) and c(10-14). The alpha and beta chains form an alternating ring which encloses part of the gamma chain. F(1) is attached to F(0) by a central stalk formed by the gamma and epsilon chains, while a peripheral stalk is formed by the delta and b chains.

It localises to the cell inner membrane. In terms of biological role, f(1)F(0) ATP synthase produces ATP from ADP in the presence of a proton or sodium gradient. F-type ATPases consist of two structural domains, F(1) containing the extramembraneous catalytic core and F(0) containing the membrane proton channel, linked together by a central stalk and a peripheral stalk. During catalysis, ATP synthesis in the catalytic domain of F(1) is coupled via a rotary mechanism of the central stalk subunits to proton translocation. Component of the F(0) channel, it forms part of the peripheral stalk, linking F(1) to F(0). This is ATP synthase subunit b from Campylobacter curvus (strain 525.92).